A 711-amino-acid chain; its full sequence is Phosphate acetyltransferase (711 aa).

Residues 390–711 (AFRFQLTELA…IALTAIQATQ (322 aa)) are phosphate acetyltransferase.

The protein in the N-terminal section; belongs to the CobB/CobQ family. In the C-terminal section; belongs to the phosphate acetyltransferase and butyryltransferase family. In terms of assembly, homohexamer.

Its subcellular location is the cytoplasm. The enzyme catalyses acetyl-CoA + phosphate = acetyl phosphate + CoA. The protein operates within metabolic intermediate biosynthesis; acetyl-CoA biosynthesis; acetyl-CoA from acetate: step 2/2. Involved in acetate metabolism. This is Phosphate acetyltransferase (pta) from Haemophilus influenzae (strain ATCC 51907 / DSM 11121 / KW20 / Rd).